The primary structure comprises 110 residues: UPF0060 membrane protein Mfla_2554 (110 aa).

4 consecutive transmembrane segments (helical) span residues 7 to 27 (VALF…PYLW), 33 to 53 (SPLL…LLTL), 61 to 81 (VYAA…WVVD), and 83 to 103 (IIPS…MAII).

This sequence belongs to the UPF0060 family.

It is found in the cell inner membrane. The sequence is that of UPF0060 membrane protein Mfla_2554 from Methylobacillus flagellatus (strain ATCC 51484 / DSM 6875 / VKM B-1610 / KT).